The following is a 369-amino-acid chain: 3-dehydroquinate synthase (369 aa).

NAD(+) is bound by residues 110–114, 134–135, Lys-147, Lys-156, and 174–177; these read GVIGD, TT, and TLKT. Zn(2+)-binding residues include Glu-189, His-254, and His-271.

Belongs to the sugar phosphate cyclases superfamily. Dehydroquinate synthase family. The cofactor is Co(2+). Zn(2+) is required as a cofactor. NAD(+) serves as cofactor.

The protein resides in the cytoplasm. It catalyses the reaction 7-phospho-2-dehydro-3-deoxy-D-arabino-heptonate = 3-dehydroquinate + phosphate. The protein operates within metabolic intermediate biosynthesis; chorismate biosynthesis; chorismate from D-erythrose 4-phosphate and phosphoenolpyruvate: step 2/7. Functionally, catalyzes the conversion of 3-deoxy-D-arabino-heptulosonate 7-phosphate (DAHP) to dehydroquinate (DHQ). This chain is 3-dehydroquinate synthase, found in Cyanothece sp. (strain PCC 7425 / ATCC 29141).